The sequence spans 930 residues: Short transient receptor potential channel 6 (930 aa).

Residues 1-27 (MSQSPRFVTRRGGSLKAAPGAGTRRNE) are disordered. Residues 1-437 (MSQSPRFVTR…CSKMGKILRG (437 aa)) are Cytoplasmic-facing. 4 ANK repeats span residues 96-125 (IEEE…SLNV), 131-160 (MGQN…LSRV), 162-188 (DALL…FAEG), and 217-246 (HDVT…RIER). Residues 438 to 458 (PFMKFVAHAASFTIFLGLLVM) traverse the membrane as a helical segment. Residues 459 to 486 (NAADRFEGTKLLPNETSTDNARQLFRMK) are Extracellular-facing. Residues 487 to 507 (TSCFSWMEMLIISWVIGMIWA) form a helical membrane-spanning segment. At 508–520 (ECKEIWTQGPKEY) the chain is on the cytoplasmic side. Residues 521-541 (LFELWNMLDFGMLAIFAASFI) form a helical membrane-spanning segment. Residues 542 to 591 (ARFMAFWHASKAQSIIDANDTLKDLTKVTLGDNVKYYNLARIKWDPTDPQ) are Extracellular-facing. Asn-560 is a glycosylation site (N-linked (GlcNAc...) asparagine). Residues 592 to 612 (IISEGLYAIAVVLSFSRIAYI) traverse the membrane as a helical segment. At 613-635 (LPANESFGPLQISLGRTVKDIFK) the chain is on the cytoplasmic side. Residues 636-656 (FMVIFIMVFVAFMIGMFNLYS) traverse the membrane as a helical segment. Residues 657-705 (YYIGAKQNEAFTTVEESFKTLFWAIFGLSEVKSVVINYNHKFIENIGYV) are Extracellular-facing. Residues 706–726 (LYGVYNVTMVIVLLNMLIAMI) form a helical membrane-spanning segment. Topologically, residues 727-930 (NSSFQEIEDD…LEPKLEESRR (204 aa)) are cytoplasmic. A Phosphoserine modification is found at Ser-814.

The protein belongs to the transient receptor (TC 1.A.4) family. STrpC subfamily. TRPC6 sub-subfamily. In terms of assembly, homodimer; forms channel complex. Interacts with MX1 and RNF24. Phosphorylated by FYN, leading to an increase of TRPC6 channel activity. In terms of processing, N-glycosylated. Lung and brain.

The protein localises to the cell membrane. It catalyses the reaction Ca(2+)(in) = Ca(2+)(out). In terms of biological role, forms a receptor-activated non-selective calcium permeant cation channel. Probably is operated by a phosphatidylinositol second messenger system activated by receptor tyrosine kinases or G-protein coupled receptors. Activated by diacylglycerol (DAG) in a membrane-delimited fashion, independently of protein kinase C. Seems not to be activated by intracellular calcium store depletion. The chain is Short transient receptor potential channel 6 from Mus musculus (Mouse).